The sequence spans 501 residues: Phosphatidylinositol 4-kinase type 2-beta (501 aa).

Disordered stretches follow at residues 1–30 and 65–122; these read MMAECDPTDGEPGNGSGDSTPETNFLSSEV and TELE…NHFP. The span at 17–27 shows a compositional bias: polar residues; sequence GDSTPETNFLS. Over residues 76 to 88 the composition is skewed to low complexity; it reads ALLLPGPAGSLSP. A compositionally biased stretch (polar residues) spans 99-117; that stretch reads NMLSSSSDNLASPGNSSGE. Positions 141-471 constitute a PI3K/PI4K catalytic domain; the sequence is GVFPERISQG…VQMPRVVVER (331 aa). Residues 147–153 are G-loop; it reads ISQGSSG. Positions 154 and 169 each coordinate ATP. Residues 174-176 are important for substrate binding; the sequence is EPY. Residues 182–195 form an important for interaction with membranes region; the sequence is KWTKYFHKVCCPCC. Residues 278-281 and 292-293 each bind ATP; these read QLFV and RK. Residues 285-293 are important for interaction with membranes; that stretch reads HEADFWLRK. The tract at residues 322-330 is catalytic loop; sequence RNTDRGNDN. Residues 362-382 form an activation loop region; that stretch reads AIDNGLAFPFKHPDEWRAYPF. D364 is a binding site for ATP. Residues 377 to 386 form an important for interaction with membranes region; the sequence is WRAYPFHWAW.

The protein belongs to the PI3/PI4-kinase family. Type II PI4K subfamily.

Its subcellular location is the cytoplasm. It localises to the cytosol. The protein localises to the golgi apparatus membrane. It is found in the endoplasmic reticulum membrane. The protein resides in the cell membrane. Its subcellular location is the early endosome membrane. It catalyses the reaction a 1,2-diacyl-sn-glycero-3-phospho-(1D-myo-inositol) + ATP = a 1,2-diacyl-sn-glycero-3-phospho-(1D-myo-inositol 4-phosphate) + ADP + H(+). In terms of biological role, contributes to the overall PI4-kinase activity of the cell. This contribution may be especially significant in plasma membrane, endosomal and Golgi compartments. The phosphorylation of phosphatidylinositol (PI) to PI4P is the first committed step in the generation of phosphatidylinositol 4,5-bisphosphate (PIP2), a precursor of the second messenger inositol 1,4,5-trisphosphate (InsP3). The chain is Phosphatidylinositol 4-kinase type 2-beta (pi4k2b) from Danio rerio (Zebrafish).